We begin with the raw amino-acid sequence, 347 residues long: Ferrochelatase (347 aa).

Cys158 is a binding site for [2Fe-2S] cluster. Fe cation-binding residues include His193 and Glu272. 3 residues coordinate [2Fe-2S] cluster: Cys332, Cys339, and Cys341.

This sequence belongs to the ferrochelatase family. As to quaternary structure, homodimer. [2Fe-2S] cluster is required as a cofactor.

The protein localises to the cytoplasm. It carries out the reaction heme b + 2 H(+) = protoporphyrin IX + Fe(2+). Its pathway is porphyrin-containing compound metabolism; protoheme biosynthesis; protoheme from protoporphyrin-IX: step 1/1. Its function is as follows. Catalyzes the ferrous insertion into protoporphyrin IX. This chain is Ferrochelatase, found in Caulobacter vibrioides (strain ATCC 19089 / CIP 103742 / CB 15) (Caulobacter crescentus).